A 99-amino-acid polypeptide reads, in one-letter code: U1-theraphotoxin-Lsp1b (99 aa).

The first 23 residues, 1 to 23, serve as a signal peptide directing secretion; that stretch reads MRSLTLAALLLCSLLLVFHTSAA. Residues 24–50 constitute a propeptide that is removed on maturation; that stretch reads EELQAQEGHLMIPGDTDTALETVDDER. Intrachain disulfides connect Cys54/Cys67, Cys58/Cys91, Cys72/Cys74, and Cys85/Cys96.

Belongs to the neurotoxin 12 (Hwtx-2) family. 04 (lasiotoxin) subfamily. In terms of tissue distribution, expressed by the venom gland.

It localises to the secreted. In terms of biological role, toxin that causes irreversible contractile paralysis into adult Aedes aegypti resulting in 100% mortality after 24 hours. This chain is U1-theraphotoxin-Lsp1b, found in Lasiodora sp. (strain IBSP 8539) (Brazilian salmon pink birdeater).